Here is a 1029-residue protein sequence, read N- to C-terminus: Pro-apoptotic serine protease NMA111 (1029 aa).

A disordered region spans residues 1–49; it reads MNGPTSQRAKRKQGSASSLDDRPPKHQRALNGAKQQSTGDNTPEEDMYD. The tract at residues 84 to 274 is serine protease; it reads VVSIRFCQTC…LPLDRPLRAL (191 aa). Residues H122, D153, and S235 each act as charge relay system in the active site. PDZ domains follow at residues 307 to 379 and 845 to 958; these read PEWE…QRGG and EFLG…VTFD. The segment at 997-1029 is disordered; sequence KAMEGEPSEGVPAVEEEAGGAVDDDVPMAAVEK. Residues 1010–1022 show a composition bias toward acidic residues; that stretch reads VEEEAGGAVDDDV.

This sequence belongs to the peptidase S1C family.

Its subcellular location is the nucleus. In terms of biological role, nuclear serine protease which mediates apoptosis. The protein is Pro-apoptotic serine protease NMA111 (NMA111) of Pyricularia oryzae (strain 70-15 / ATCC MYA-4617 / FGSC 8958) (Rice blast fungus).